Here is a 544-residue protein sequence, read N- to C-terminus: Ribosomal oxygenase 1 (544 aa).

The disordered stretch occupies residues 1 to 78 (MERKHMSALS…HEGERDCREM (78 aa)). The segment covering 10-19 (SIYQSLSGGK) has biased composition (polar residues). The span at 42–53 (PSKKATKKKGTK) shows a compositional bias: basic residues. A compositionally biased stretch (basic and acidic residues) spans 63-78 (SSEKEKHEGERDCREM). Positions 197 to 342 (CSIRMLNPQA…DLMLKLMPAA (146 aa)) constitute a JmjC domain. His-243, Asp-245, and His-308 together coordinate Fe cation.

The protein belongs to the ROX family. NO66 subfamily. Fe(2+) is required as a cofactor.

It is found in the nucleus. It localises to the nucleolus. Its subcellular location is the nucleoplasm. The catalysed reaction is N(6),N(6)-dimethyl-L-lysyl(36)-[histone H3] + 2 2-oxoglutarate + 2 O2 = L-lysyl(36)-[histone H3] + 2 formaldehyde + 2 succinate + 2 CO2. It catalyses the reaction N(6)-methyl-L-lysyl-[protein] + 2-oxoglutarate + O2 = L-lysyl-[protein] + formaldehyde + succinate + CO2. The enzyme catalyses L-histidyl-[protein] + 2-oxoglutarate + O2 = (3S)-3-hydroxy-L-histidyl-[protein] + succinate + CO2. Oxygenase that can act as both a histone lysine demethylase and a ribosomal histidine hydroxylase. Specifically demethylates 'Lys-4' (H3K4me) and 'Lys-36' (H3K36me) of histone H3, thereby playing a central role in histone code. Preferentially demethylates trimethylated H3 'Lys-4' (H3K4me3) and monomethylated H3 'Lys-4' (H3K4me1) residues, while it has weaker activity for dimethylated H3 'Lys-36' (H3K36me2). Also catalyzes demethylation of non-histone proteins. Also catalyzes the hydroxylation of 60S ribosomal protein L8 on 'His-216', thereby playing a role in ribosome biogenesis. The polypeptide is Ribosomal oxygenase 1 (riox1) (Danio rerio (Zebrafish)).